The chain runs to 159 residues: Ribosomal RNA large subunit methyltransferase H (159 aa).

S-adenosyl-L-methionine-binding positions include Leu-76, Gly-108, and 127-132 (FSKMTF).

The protein belongs to the RNA methyltransferase RlmH family. Homodimer.

The protein localises to the cytoplasm. It carries out the reaction pseudouridine(1915) in 23S rRNA + S-adenosyl-L-methionine = N(3)-methylpseudouridine(1915) in 23S rRNA + S-adenosyl-L-homocysteine + H(+). In terms of biological role, specifically methylates the pseudouridine at position 1915 (m3Psi1915) in 23S rRNA. In Halalkalibacterium halodurans (strain ATCC BAA-125 / DSM 18197 / FERM 7344 / JCM 9153 / C-125) (Bacillus halodurans), this protein is Ribosomal RNA large subunit methyltransferase H.